We begin with the raw amino-acid sequence, 161 residues long: Phosphopantetheine adenylyltransferase (161 aa).

Thr10 serves as a coordination point for substrate. ATP-binding positions include 10–11 (TF) and His18. Positions 42, 74, and 88 each coordinate substrate. Residues 89–91 (GLR), Glu99, and 124–130 (NSFISST) contribute to the ATP site.

It belongs to the bacterial CoaD family. In terms of assembly, homohexamer. The cofactor is Mg(2+).

Its subcellular location is the cytoplasm. It carries out the reaction (R)-4'-phosphopantetheine + ATP + H(+) = 3'-dephospho-CoA + diphosphate. The protein operates within cofactor biosynthesis; coenzyme A biosynthesis; CoA from (R)-pantothenate: step 4/5. Functionally, reversibly transfers an adenylyl group from ATP to 4'-phosphopantetheine, yielding dephospho-CoA (dPCoA) and pyrophosphate. The polypeptide is Phosphopantetheine adenylyltransferase (Photobacterium profundum (strain SS9)).